Here is a 157-residue protein sequence, read N- to C-terminus: Ribosome-binding factor A (157 aa).

The interval 124–157 is disordered; the sequence is SAGAQFAGDADPYRKPESDDESDTAAKTDGDAAE. Basic and acidic residues predominate over residues 147–157; sequence TAAKTDGDAAE.

The protein belongs to the RbfA family. In terms of assembly, monomer. Binds 30S ribosomal subunits, but not 50S ribosomal subunits or 70S ribosomes.

The protein localises to the cytoplasm. Its function is as follows. One of several proteins that assist in the late maturation steps of the functional core of the 30S ribosomal subunit. Associates with free 30S ribosomal subunits (but not with 30S subunits that are part of 70S ribosomes or polysomes). Required for efficient processing of 16S rRNA. May interact with the 5'-terminal helix region of 16S rRNA. The chain is Ribosome-binding factor A from Streptomyces avermitilis (strain ATCC 31267 / DSM 46492 / JCM 5070 / NBRC 14893 / NCIMB 12804 / NRRL 8165 / MA-4680).